A 231-amino-acid polypeptide reads, in one-letter code: MPLAPPANSVETMASLMPLSPYLSPTVLLLVSCDLGFVRADRPPSPVNVTVTHLRANSATVSWDVPEGNIVIGYSISQQRQNGPGQRVIREVNTTTRACALWGLAEDSDYTVQVRSIGLRGESPPGPRVHFRTLKGSDRLPSNSSSPGDITVEGLDGERPLQTGEVVIIVVVLLMWAAVIGLFCRQYDIIKDNDSNNNPKEKGKGPEQSPQGRPVGTTRQKKSPSINTIDV.

Residues 1 to 40 form the signal peptide; sequence MPLAPPANSVETMASLMPLSPYLSPTVLLLVSCDLGFVRA. At 41–163 the chain is on the extracellular side; that stretch reads DRPPSPVNVT…GLDGERPLQT (123 aa). Positions 43-136 constitute a Fibronectin type-III domain; it reads PPSPVNVTVT…PRVHFRTLKG (94 aa). N-linked (GlcNAc...) asparagine glycosylation is found at Asn48 and Asn143. The segment at 118-156 is disordered; it reads GLRGESPPGPRVHFRTLKGSDRLPSNSSSPGDITVEGLD. A helical transmembrane segment spans residues 164-184; the sequence is GEVVIIVVVLLMWAAVIGLFC. Over 185-231 the chain is Cytoplasmic; it reads RQYDIIKDNDSNNNPKEKGKGPEQSPQGRPVGTTRQKKSPSINTIDV. Residues 193–205 show a composition bias toward basic and acidic residues; sequence NDSNNNPKEKGKG. A disordered region spans residues 193-231; sequence NDSNNNPKEKGKGPEQSPQGRPVGTTRQKKSPSINTIDV.

In terms of tissue distribution, predominantly expressed in the liver and in the brain, including in the cortex, hypothalamus and hippocampus. Also expressed in heart, lung, kidney and testis. In the colon, expressed in the epithelium and in a subset of immune cells in lymphoid aggregates.

It is found in the membrane. The protein localises to the secreted. Has anti-inflammatory properties. In the colon, acts on macrophages to down-regulate inflammation. May suppress osteoclastogenesis and mature osteoclast resorptive function. In white adipose tissue, decreases local inflammation, via interaction with GPR116. Also required for proper systemic glucose tolerance, specifically sensitizing white adipocytes to insulin and promoting glucose uptake. The insulin sensitizing function in adipose tissue is mediated by interaction with ADGRF5/GPR116 and activation of cAMP signaling. This chain is Fibronectin type III domain-containing protein 4 (Fndc4), found in Mus musculus (Mouse).